Here is a 216-residue protein sequence, read N- to C-terminus: DNA gyrase subunit B (216 aa).

Residues 140–216 (SELYLVEGDS…PDKLRYHKII (77 aa)) enclose the Toprim domain.

It belongs to the type II topoisomerase GyrB family. In terms of assembly, heterotetramer, composed of two GyrA and two GyrB chains. In the heterotetramer, GyrA contains the active site tyrosine that forms a transient covalent intermediate with DNA, while GyrB binds cofactors and catalyzes ATP hydrolysis.

The protein localises to the cytoplasm. The enzyme catalyses ATP-dependent breakage, passage and rejoining of double-stranded DNA.. Functionally, a type II topoisomerase that negatively supercoils closed circular double-stranded (ds) DNA in an ATP-dependent manner to modulate DNA topology and maintain chromosomes in an underwound state. Negative supercoiling favors strand separation, and DNA replication, transcription, recombination and repair, all of which involve strand separation. Also able to catalyze the interconversion of other topological isomers of dsDNA rings, including catenanes and knotted rings. Type II topoisomerases break and join 2 DNA strands simultaneously in an ATP-dependent manner. The polypeptide is DNA gyrase subunit B (gyrB) (Acinetobacter bereziniae (Acinetobacter genomosp. 10)).